The chain runs to 109 residues: Parvalbumin-7 (109 aa).

Residue Ala2 is modified to N-acetylalanine. 2 consecutive EF-hand domains span residues 39–74 (LSAD…FSAD) and 78–109 (LTDK…LVHE). Ca(2+) contacts are provided by Asp52, Asp54, Ser56, Phe58, Glu60, Glu63, Asp91, Asp93, Asp95, Lys97, and Glu102.

Belongs to the parvalbumin family.

In terms of biological role, in muscle, parvalbumin is thought to be involved in relaxation after contraction. It binds two calcium ions. The sequence is that of Parvalbumin-7 (pvalb7) from Danio rerio (Zebrafish).